The primary structure comprises 126 residues: Glycine cleavage system H protein (126 aa).

The Lipoyl-binding domain occupies 22 to 104 (TVTIGITEYA…YEKAWMVKVE (83 aa)). N6-lipoyllysine is present on Lys-63.

It belongs to the GcvH family. As to quaternary structure, the glycine cleavage system is composed of four proteins: P, T, L and H. (R)-lipoate serves as cofactor.

The glycine cleavage system catalyzes the degradation of glycine. The H protein shuttles the methylamine group of glycine from the P protein to the T protein. In terms of biological role, is also involved in protein lipoylation via its role as an octanoyl/lipoyl carrier protein intermediate. The polypeptide is Glycine cleavage system H protein (Staphylococcus saprophyticus subsp. saprophyticus (strain ATCC 15305 / DSM 20229 / NCIMB 8711 / NCTC 7292 / S-41)).